A 90-amino-acid polypeptide reads, in one-letter code: Essential MCU regulator, mitochondrial (90 aa).

Residues 49-68 (GVLKLIFVSASSLYIGGLIA) traverse the membrane as a helical segment.

It belongs to the SMDT1/EMRE family.

The protein localises to the mitochondrion inner membrane. Its function is as follows. Essential regulatory subunit of the mitochondrial calcium uniporter (mcu-1) channel, a protein that mediates calcium uptake into mitochondria. The protein is Essential MCU regulator, mitochondrial of Caenorhabditis elegans.